Here is a 1296-residue protein sequence, read N- to C-terminus: ABC transporter B family member 21 (1296 aa).

Positions 1–59 are disordered; sequence MDSVIESEEGLKVDSPNRADAETSNSKIHEEDEKELKTESDLKEEKKKTEKNKQEEDEK. Positions 9 to 59 are enriched in basic and acidic residues; it reads EGLKVDSPNRADAETSNSKIHEEDEKELKTESDLKEEKKKTEKNKQEEDEK. A helical transmembrane segment spans residues 77 to 97; sequence IILMILGTIGAVGNGLGFPIM. The ABC transmembrane type-1 1 domain occupies 80 to 368; sequence MILGTIGAVG…ASPCLSAFAA (289 aa). Asparagine 113 is a glycosylation site (N-linked (GlcNAc...) asparagine). The next 5 membrane-spanning stretches (helical) occupy residues 128-148, 205-225, 227-247, 307-327, and 336-356; these read FVYL…GWMI, IQLV…GWLL, LVMV…AIVI, GLGL…AVWY, and GYTG…SMSL. Positions 403 to 639 constitute an ABC transporter 1 domain; it reads IELNNVNFSY…PEGAYSQLIR (237 aa). Asparagine 409 carries N-linked (GlcNAc...) asparagine glycosylation. Position 438–445 (438–445) interacts with ATP; it reads GQSGSGKS. N-linked (GlcNAc...) asparagine glycans are attached at residues asparagine 505, asparagine 519, and asparagine 590. Basic and acidic residues predominate over residues 640 to 662; the sequence is LQEDTKQTEDSTDEQKLSMESMK. The segment at 640 to 672 is disordered; sequence LQEDTKQTEDSTDEQKLSMESMKRSSLRKSSLS. 2 positions are modified to phosphoserine: serine 657 and serine 660. The ABC transmembrane type-1 2 domain occupies 730 to 1017; that stretch reads LILGSIAAVL…SSSLSPDSSK (288 aa). Helical transmembrane passes span 731 to 751 and 774 to 794; these read ILGS…GILI and IIFM…TIFF. Residue asparagine 826 is glycosylated (N-linked (GlcNAc...) asparagine). 3 consecutive transmembrane segments (helical) span residues 865 to 885, 952 to 972, and 986 to 1006; these read VIAF…LPLI, GIVS…SYAA, and TTFD…VAIS. Positions 1052–1289 constitute an ABC transporter 2 domain; sequence IELRHISFKY…KDGVYASLVQ (238 aa). 1087–1094 is an ATP binding site; that stretch reads GESGSGKS. Asparagine 1141 and asparagine 1240 each carry an N-linked (GlcNAc...) asparagine glycan.

It belongs to the ABC transporter superfamily. ABCB family. Multidrug resistance exporter (TC 3.A.1.201) subfamily.

Its subcellular location is the membrane. The protein is ABC transporter B family member 21 (ABCB21) of Arabidopsis thaliana (Mouse-ear cress).